The primary structure comprises 184 residues: Lactoylglutathione lyase (184 aa).

Position 2 is an N-acetylalanine (Ala2). Cys19 and Cys20 are disulfide-bonded. Residues 31–177 form the VOC domain; the sequence is LLQQTMLRIK…DGYWIEILNP (147 aa). The substrate site is built by Gln34 and Arg38. Zn(2+) is bound at residue Gln34. At Lys88 the chain carries N6-succinyllysine. Position 100 (Glu100) interacts with Zn(2+). Position 104 (Asn104) interacts with substrate. Residue Thr107 is modified to Phosphothreonine. Arg123 and His127 together coordinate substrate. His127 provides a ligand contact to Zn(2+). Cys139 carries the S-glutathionyl cysteine modification. Lys148 is modified (N6-acetyllysine; alternate). Position 148 is an N6-succinyllysine; alternate (Lys148). 157-158 lines the substrate pocket; that stretch reads KM. Glu173 is a Zn(2+) binding site. The Proton donor/acceptor role is filled by Glu173.

It belongs to the glyoxalase I family. In terms of assembly, homodimer. It depends on Zn(2+) as a cofactor. In terms of processing, glutathionylation at Cys-139 inhibits enzyme activity. Phosphorylated at Thr-107 in the presence of CaMK2. However, this is a consensus site for phosphorylation by CK2 so phosphorylation may be mediated by CK2 rather than CaMK2. Phosphorylation is induced by TNF and suppresses the TNF-induced transcriptional activity of NF-kappa-B. Post-translationally, exists in a nitric oxide (NO)-modified form. The exact nature of the modification is unknown, but it suppresses the TNF-induced transcriptional activity of NF-kappa-B.

It carries out the reaction (R)-S-lactoylglutathione = methylglyoxal + glutathione. The protein operates within secondary metabolite metabolism; methylglyoxal degradation; (R)-lactate from methylglyoxal: step 1/2. With respect to regulation, subject to competitive inhibition by methyl-gerfelin. Functionally, catalyzes the conversion of hemimercaptal, formed from methylglyoxal and glutathione, to S-lactoylglutathione. Involved in the regulation of TNF-induced transcriptional activity of NF-kappa-B. Required for normal osteoclastogenesis. This chain is Lactoylglutathione lyase (Glo1), found in Mus musculus (Mouse).